Consider the following 584-residue polypeptide: Tricyclene synthase 1e20, chloroplastic (584 aa).

The N-terminal 45 residues, 1–45, are a transit peptide targeting the chloroplast; that stretch reads MIYIWICFYLQTTLLPCSLSTRTKFAICHNTSKLHRAAYKTSRWN. Residues N30, N209, and N322 are each glycosylated (N-linked (GlcNAc...) asparagine). Residues D341 and D345 each coordinate Mg(2+). Residues 341–345 carry the DDXXD motif motif; sequence DDIFD. N-linked (GlcNAc...) asparagine glycans are attached at residues N387 and N468. Mg(2+) is bound by residues N485, S489, and E493. N-linked (GlcNAc...) asparagine glycosylation is present at N512.

This sequence belongs to the terpene synthase family. Tpsg subfamily. It depends on Mg(2+) as a cofactor. The cofactor is Mn(2+). As to expression, accumulates at low levels in flowers; mostly expressed in both upper and lower petal lobes, and, to a lower extent, in tube and stamens.

It localises to the plastid. The protein resides in the chloroplast stroma. The enzyme catalyses (2E)-geranyl diphosphate = tricyclene + diphosphate. The catalysed reaction is (2E)-geranyl diphosphate = beta-myrcene + diphosphate. Its pathway is secondary metabolite biosynthesis; terpenoid biosynthesis. Functionally, may contribute to floral scent emission. The sequence is that of Tricyclene synthase 1e20, chloroplastic (1e20) from Antirrhinum majus (Garden snapdragon).